Here is a 130-residue protein sequence, read N- to C-terminus: Large ribosomal subunit protein bL12 (130 aa).

It belongs to the bacterial ribosomal protein bL12 family. Homodimer. Part of the ribosomal stalk of the 50S ribosomal subunit. Forms a multimeric L10(L12)X complex, where L10 forms an elongated spine to which 2 to 4 L12 dimers bind in a sequential fashion. Binds GTP-bound translation factors.

Its function is as follows. Forms part of the ribosomal stalk which helps the ribosome interact with GTP-bound translation factors. Is thus essential for accurate translation. The polypeptide is Large ribosomal subunit protein bL12 (Synechococcus sp. (strain RCC307)).